We begin with the raw amino-acid sequence, 441 residues long: Keratin, type I cytoskeletal 17 (441 aa).

Positions 1–23 (MTTTIRHFSSGSIKGSSGLAGGS) are disordered. The tract at residues 1–91 (MTTTIRHFSS…GGVDGLLVGG (91 aa)) is head. Residues 9-23 (SSGSIKGSSGLAGGS) are compositionally biased toward low complexity. The residue at position 12 (Ser-12) is a Phosphoserine. Residue Lys-14 forms a Glycyl lysine isopeptide (Lys-Gly) (interchain with G-Cter in SUMO1); alternate linkage. Residue Lys-14 forms a Glycyl lysine isopeptide (Lys-Gly) (interchain with G-Cter in SUMO2); alternate linkage. Phosphoserine is present on residues Ser-24, Ser-30, Ser-32, and Ser-37. Ser-42 is modified (phosphoserine; by RPS6KA1). A coil 1A region spans residues 92-128 (EKATMQNLNDRLASYLDKVRALEEANTELELKIRDWY). The IF rod domain occupies 92–403 (EKATMQNLND…RLLEGEDAHL (312 aa)). Thr-118 bears the Phosphothreonine mark. The segment at 129 to 146 (QKQAPGPAPDYSSYFKTI) is linker 1. Residues 147–238 (EDLRNKIHTA…NHEEEMKALR (92 aa)) form a coil 1B region. The interval 239-258 (GQVGGEINVEMDAAPGVDLS) is linker 12. The coil 2 stretch occupies residues 259 to 400 (RILNEMRDQY…TYRRLLEGED (142 aa)). Lys-286 participates in a covalent cross-link: Glycyl lysine isopeptide (Lys-Gly) (interchain with G-Cter in SUMO2). Thr-287 carries the post-translational modification Phosphothreonine. Ser-331 is subject to Phosphoserine. The segment at 401–441 (AHLTQYKTKEPVTTRQVRTIVEEVQDGRVISSREQVHQTSH) is tail. Glycyl lysine isopeptide (Lys-Gly) (interchain with G-Cter in SUMO1); alternate cross-links involve residues Lys-407 and Lys-409. Residues Lys-407 and Lys-409 each participate in a glycyl lysine isopeptide (Lys-Gly) (interchain with G-Cter in SUMO2); alternate cross-link.

Belongs to the intermediate filament family. In terms of assembly, heterodimer of a type I and a type II keratin. KRT17 associates with KRT6 isomers (KRT6A or KRT6B). Interacts with TRADD and SFN. In terms of processing, phosphorylation at Ser-42 occurs in a growth- and stress-dependent fashion in skin keratinocytes, it has no effect on filament organization.

The protein localises to the cytoplasm. Functionally, type I keratin involved in the formation and maintenance of various skin appendages, specifically in determining shape and orientation of hair. Required for the correct growth of hair follicles, in particular for the persistence of the anagen (growth) state. Modulates the function of TNF-alpha in the specific context of hair cycling. Regulates protein synthesis and epithelial cell growth through binding to the adapter protein SFN and by stimulating Akt/mTOR pathway. Involved in tissue repair. May be a marker of basal cell differentiation in complex epithelia and therefore indicative of a certain type of epithelial 'stem cells'. Acts as a promoter of epithelial proliferation by acting a regulator of immune response in skin: promotes Th1/Th17-dominated immune environment contributing to the development of basaloid skin tumors. May act as an autoantigen in the immunopathogenesis of psoriasis, with certain peptide regions being a major target for autoreactive T-cells and hence causing their proliferation. The sequence is that of Keratin, type I cytoskeletal 17 from Bos taurus (Bovine).